Consider the following 134-residue polypeptide: Small ribosomal subunit protein uS11 (134 aa).

The protein belongs to the universal ribosomal protein uS11 family. In terms of assembly, part of the 30S ribosomal subunit. Interacts with proteins S7 and S18. Binds to IF-3.

In terms of biological role, located on the platform of the 30S subunit, it bridges several disparate RNA helices of the 16S rRNA. Forms part of the Shine-Dalgarno cleft in the 70S ribosome. The protein is Small ribosomal subunit protein uS11 of Variovorax paradoxus (strain S110).